A 340-amino-acid chain; its full sequence is Ribosomal RNA large subunit methyltransferase F (340 aa).

The interval 1 to 36 is disordered; it reads MNAPRTPKPARKKPDSATPAKPVEPRKEASLHPRNR.

This sequence belongs to the methyltransferase superfamily. METTL16/RlmF family.

The protein resides in the cytoplasm. The catalysed reaction is adenosine(1618) in 23S rRNA + S-adenosyl-L-methionine = N(6)-methyladenosine(1618) in 23S rRNA + S-adenosyl-L-homocysteine + H(+). Specifically methylates the adenine in position 1618 of 23S rRNA. This chain is Ribosomal RNA large subunit methyltransferase F, found in Pseudomonas fluorescens (strain Pf0-1).